The primary structure comprises 558 residues: DALR anticodon-binding domain-containing protein 3 (558 aa).

Residues 213–240 are disordered; the sequence is KALENSAYRDRETEKGKRRSRGEEIEGE.

The polypeptide is DALR anticodon-binding domain-containing protein 3 (dalrd3) (Danio rerio (Zebrafish)).